A 230-amino-acid polypeptide reads, in one-letter code: Thymine/uracil-DNA glycosylase (230 aa).

[4Fe-4S] cluster contacts are provided by Cys-204, Cys-211, Cys-214, and Cys-221.

The protein belongs to the Nth/MutY family. It depends on [4Fe-4S] cluster as a cofactor.

The catalysed reaction is Hydrolyzes mismatched double-stranded DNA and polynucleotides, releasing free thymine.. Its function is as follows. DNA glycosylase that excises thymine from T/G mismatches and uracil from U/G mismatches. Can also process T/GO and U/GO, but not A/G, T/C and U/C. Has weak AP lyase activity. This chain is Thymine/uracil-DNA glycosylase, found in Pyrobaculum aerophilum (strain ATCC 51768 / DSM 7523 / JCM 9630 / CIP 104966 / NBRC 100827 / IM2).